We begin with the raw amino-acid sequence, 178 residues long: Deoxycytidylate deaminase (178 aa).

In terms of domain architecture, CMP/dCMP-type deaminase spans 14-146 (EWPEYFMAVA…EATAARLLFD (133 aa)). His84 contacts Zn(2+). Glu86 serves as the catalytic Proton donor. Residues Cys110 and Cys113 each contribute to the Zn(2+) site. Ser174 bears the Phosphoserine mark.

The protein belongs to the cytidine and deoxycytidylate deaminase family. In terms of assembly, homohexamer. Zn(2+) serves as cofactor.

It catalyses the reaction dCMP + H2O + H(+) = dUMP + NH4(+). It carries out the reaction 5-hydroxymethyl-dCMP + H2O + H(+) = 5-hydroxymethyl-dUMP + NH4(+). With respect to regulation, allosteric enzyme whose activity is greatly influenced by the end products of its metabolic pathway, dCTP and dTTP. Functionally, catalyzes the deamination of dCMP to dUMP, providing the nucleoside monophosphate substrate for the thymidylate synthase/TYMS. Also, part of a nucleotide salvage pathway that eliminates epigenetically modified 5-hydroxymethyl-dCMP (hmdCMP) in a two-step process entailing deamination to cytotoxic 5-hydroxymethyl-dUMP (hmdUMP), followed by its hydrolysis into 5-hydroxymethyluracil (hmU) and 2-deoxy-D-ribose 5-phosphate (deoxyribosephosphate). Catalyzes the first step in that pathway, the deamination of 5-hydroxymethyl-dCMP (hmdCMP). In Pongo abelii (Sumatran orangutan), this protein is Deoxycytidylate deaminase.